Reading from the N-terminus, the 487-residue chain is Cysteine--tRNA ligase (487 aa).

Zn(2+) is bound at residue cysteine 30. A 'HIGH' region motif is present at residues 32–42 (PTVYGHAHLGH). Zn(2+) is bound by residues cysteine 226, histidine 251, and glutamate 255. The short motif at 283–287 (KMGKS) is the 'KMSKS' region element. Lysine 286 contributes to the ATP binding site.

This sequence belongs to the class-I aminoacyl-tRNA synthetase family. In terms of assembly, monomer. Requires Zn(2+) as cofactor.

The protein localises to the cytoplasm. It carries out the reaction tRNA(Cys) + L-cysteine + ATP = L-cysteinyl-tRNA(Cys) + AMP + diphosphate. The protein is Cysteine--tRNA ligase (cysS) of Chlorobaculum tepidum (strain ATCC 49652 / DSM 12025 / NBRC 103806 / TLS) (Chlorobium tepidum).